Reading from the N-terminus, the 324-residue chain is uncharacterized protein (324 aa).

This is an uncharacterized protein from Borreliella burgdorferi (strain ATCC 35210 / DSM 4680 / CIP 102532 / B31) (Borrelia burgdorferi).